Reading from the N-terminus, the 361-residue chain is Probable sugar phosphate/phosphate translocator At1g12500 (361 aa).

Valine 2 bears the N-acetylvaline mark. A run of 9 helical transmembrane segments spans residues threonine 56 to leucine 76, isoleucine 90 to isoleucine 110, phenylalanine 125 to serine 145, phenylalanine 153 to threonine 173, isoleucine 192 to alanine 212, leucine 240 to glutamate 260, leucine 276 to phenylalanine 296, threonine 306 to phenylalanine 326, and proline 329 to serine 349. The EamA domain occupies proline 89–serine 196.

Belongs to the TPT transporter family. TPT (TC 2.A.7.9) subfamily.

It is found in the membrane. The chain is Probable sugar phosphate/phosphate translocator At1g12500 from Arabidopsis thaliana (Mouse-ear cress).